A 210-amino-acid polypeptide reads, in one-letter code: Ovomucoid (210 aa).

Positions 1 to 24 (MAMAGVFVLFSFVLCGFLPDAAFG) are cleaved as a signal peptide. 3 Kazal-like domains span residues 25–88 (AEVD…ECKE), 89–153 (TVPM…GCRK), and 156–210 (AAVS…FGKC). 3 disulfide bridges follow: C29/C68, C46/C65, and C54/C86. A glycan (N-linked (GlcNAc...) asparagine) is linked at N34. 3 N-linked (GlcNAc...) asparagine glycosylation sites follow: N77, N93, and N99. 6 disulfides stabilise this stretch: C94/C133, C111/C130, C119/C151, C162/C192, C170/C189, and C178/C210. Residue N199 is glycosylated (N-linked (GlcNAc...) asparagine; partial).

Its subcellular location is the secreted. Its function is as follows. Serine protease inhibitor. Inhibits trypsin. The protein is Ovomucoid of Gallus gallus (Chicken).